The chain runs to 341 residues: Protein-glutamate methylesterase/protein-glutamine glutaminase 1 (341 aa).

The region spanning 2–119 is the Response regulatory domain; the sequence is KVGIVNDSAL…SDAKLTAGPL (118 aa). Asp-53 bears the 4-aspartylphosphate mark. The 186-residue stretch at 146-331 folds into the CheB-type methylesterase domain; it reads TLAASRLVAI…LTAIAPRLVQ (186 aa). Active-site residues include Ser-158, His-185, and Asp-278.

Belongs to the CheB family. In terms of processing, phosphorylated by CheA. Phosphorylation of the N-terminal regulatory domain activates the methylesterase activity.

The protein resides in the cytoplasm. It catalyses the reaction [protein]-L-glutamate 5-O-methyl ester + H2O = L-glutamyl-[protein] + methanol + H(+). The enzyme catalyses L-glutaminyl-[protein] + H2O = L-glutamyl-[protein] + NH4(+). Involved in chemotaxis. Part of a chemotaxis signal transduction system that modulates chemotaxis in response to various stimuli. Catalyzes the demethylation of specific methylglutamate residues introduced into the chemoreceptors (methyl-accepting chemotaxis proteins or MCP) by CheR. Also mediates the irreversible deamidation of specific glutamine residues to glutamic acid. The protein is Protein-glutamate methylesterase/protein-glutamine glutaminase 1 of Cupriavidus pinatubonensis (strain JMP 134 / LMG 1197) (Cupriavidus necator (strain JMP 134)).